Here is a 449-residue protein sequence, read N- to C-terminus: Biotin carboxylase (449 aa).

One can recognise a Biotin carboxylation domain in the interval 4 to 448 (MIEKVLIANR…NIHYLEKMLG (445 aa)). ATP contacts are provided by residues K119, K162, 168–169 (GG), 204–207 (EKYL), H212, and H239. One can recognise an ATP-grasp domain in the interval 123–320 (IAAMKAAGVP…IVKEQILIAA (198 aa)). K241 is a binding site for hydrogencarbonate. ATP is bound by residues E279 and E291. Mg(2+)-binding residues include E279, E291, and N293. Residues E279, E291, and N293 each contribute to the Mn(2+) site. Hydrogencarbonate contacts are provided by R295, V298, and R341. R295 is a catalytic residue. R341 is a binding site for biotin.

In terms of assembly, acetyl-CoA carboxylase is a heterohexamer of biotin carboxyl carrier protein, biotin carboxylase and the two subunits of carboxyl transferase in a 2:2 complex. Mg(2+) serves as cofactor. Requires Mn(2+) as cofactor.

The enzyme catalyses N(6)-biotinyl-L-lysyl-[protein] + hydrogencarbonate + ATP = N(6)-carboxybiotinyl-L-lysyl-[protein] + ADP + phosphate + H(+). The protein operates within lipid metabolism; malonyl-CoA biosynthesis; malonyl-CoA from acetyl-CoA: step 1/1. This protein is a component of the acetyl coenzyme A carboxylase complex; first, biotin carboxylase catalyzes the carboxylation of the carrier protein and then the transcarboxylase transfers the carboxyl group to form malonyl-CoA. This chain is Biotin carboxylase (accC), found in Allochromatium vinosum (strain ATCC 17899 / DSM 180 / NBRC 103801 / NCIMB 10441 / D) (Chromatium vinosum).